The primary structure comprises 40 residues: Natriuretic peptide TNPd (40 aa).

C9 and C25 form a disulfide bridge.

The protein belongs to the natriuretic peptide family. Expressed by the venom gland.

It is found in the secreted. Functionally, snake venom natriuretic peptide that exhibits vasoactive and hypotensive activity. Stimulates cGMP production through the natriuretic peptide receptor 1 (NPR1) with very high potencies for the rat NPR1 (EC(50)=18 nM), and very weak potencies over human NPR1 (30% activation at 10 uM). The sequence is that of Natriuretic peptide TNPd from Oxyuranus microlepidotus (Inland taipan).